A 508-amino-acid polypeptide reads, in one-letter code: Protein DETOXIFICATION 52 (508 aa).

Transmembrane regions (helical) follow at residues 48–68 (ILAALILYARSAISMLFLGHI), 78–98 (LAIAFANITGYSVLAGLALGM), 122–142 (VLFLLTSSVVIVALWLNLGKI), 156–176 (AQTYILCSIPDLLTNSFLHPL), 189–209 (LTLATLAGTIFHIPMNFFLVS), 222–242 (AAASNLLVVIFLVAHVWIAGL), 270–290 (IGVCLEWWWYEIMTVLCGLLI), 300–320 (GILIQTTSLLYIFPSSLGLAV), 341–361 (IVAVSFAGVMGLTASAFAWGV), 368–388 (IFTNDVAIIKLTAAALPILGL), 415–437 (INLGAFYLVGTPVAVGLTFWAAY), and 441–463 (GLWVGLLAAQICCAAMMLYVVAT).

It belongs to the multi antimicrobial extrusion (MATE) (TC 2.A.66.1) family. Detected in the part of the veins in cotyledons of 6-day-old seedlings and the basal parts of the petioles in older plants. Highly expressed in the vascular tissues of hypocotyl in dark-grown seedlings.

It is found in the late endosome membrane. Its function is as follows. May act as a negative regulator of hypocotyl cell elongation in the light. The protein is Protein DETOXIFICATION 52 of Arabidopsis thaliana (Mouse-ear cress).